The sequence spans 1233 residues: NACHT, LRR and PYD domains-containing protein 1b allele 1 (1233 aa).

Positions 1–22 are disordered; it reads MEESPPKQKSNTKVAQHEGQQD. Residues 126-435 enclose the NACHT domain; sequence QLVIIEGAAG…EFFAAISCIL (310 aa). 132–139 is a binding site for ATP; it reads GAAGIGKS. LRR repeat units follow at residues 627-647 and 684-704; these read NLEG…QSLC and SLTE…RMLC. The segment at 850 to 983 is ZU5; it reads FWGPIGPVAT…GYTVLKNPSF (134 aa). In terms of domain architecture, FIIND spans 850 to 1133; the sequence is FWGPIGPVAT…LRPALPRIAQ (284 aa). Residues 984–1133 form a UPA region; sequence SPMGVVLRII…LRPALPRIAQ (150 aa). One can recognise a CARD domain in the interval 1143–1226; it reads HFMDQHREQL…HLVMDLLEKS (84 aa).

The protein belongs to the NLRP family. Interacts with DPP9; leading to inhibit activation of the inflammasome. DPP9 acts via formation of a ternary complex, composed of a DPP9 homodimer, one full-length Nlrp1b protein, and one cleaved C-terminus of Nlrp1b (NACHT, LRR and PYD domains-containing protein 1b, C-terminus). Interacts with DPP8; leading to inhibit activation of the inflammasome, probably via formation of a ternary complex with DPP8. Interacts (via LRR repeats) with BCL2 and BCL2L1 (via the loop between motifs BH4 and BH3). Interacts with NOD2; this interaction may increase IL1B release. Interacts with EIF2AK2/PKR; this interaction requires EIF2AK2 activity, is accompanied by EIF2AK2 autophosphorylation and promotes inflammasome assembly in response to B.anthracis lethal toxin. Interacts with MEFV; this interaction targets Nlrp1b to degradation by autophagy, hence preventing excessive IL1B- and IL18-mediated inflammation. In terms of assembly, interacts with the C-terminal part of Nlrp1b (NACHT, LRR and PYD domains-containing protein 1b, C-terminus) in absence of pathogens and other damage-associated signals. As to quaternary structure, interacts with the N-terminal part of Nlrp1b (NACHT, LRR and PYD domains-containing protein 1b, N-terminus) in absence of pathogens and other damage-associated signals. Homomultimer; forms the Nlrp1b inflammasome polymeric complex, a filament composed of homopolymers of this form in response to pathogens and other damage-associated signals. The Nlrp1b inflammasome polymeric complex directly recruits pro-caspase-1 (proCASP1) independently of PYCARD/ASC. Interacts (via CARD domain) with CASP1 (via CARD domain); leading to CASP1 activation. Post-translationally, autocatalytically cleaved. Autocatalytic cleavage in FIIND region occurs constitutively, prior to activation signals, and is required for inflammasome activity (IL1B release), possibly by facilitating CASP1 binding. Both N- and C-terminal parts remain associated non-covalently. In terms of processing, ubiquitinated by UBR2, a component of the N-end rule pathway in response to pathogens and other damage-associated signals, leading to its degradation by the proteasome and subsequent release of the cleaved C-terminal part of the protein (NACHT, LRR and PYD domains-containing protein 1b, C-terminus), which polymerizes and forms the Nlrp1b inflammasome. (Microbial infection) Cleavage by B.anthracis lethal toxin (LT) endopeptidase promotes ubiquitination and degradation of the N-terminal part, releasing the cleaved C-terminal part of the protein (NACHT, LRR and PYD domains-containing protein 1b, C-terminus), which polymerizes and forms the Nlrp1b inflammasome. Post-translationally, (Microbial infection) Ubiquitinated by S.flexneri IpaH7.8, leading to its degradation by the proteasome and subsequent release of the cleaved C-terminal part of the protein (NACHT, LRR and PYD domains-containing protein 1b, C-terminus), which polymerizes and forms the Nlrp1b inflammasome. As to expression, widely expressed, including in macrophages.

It is found in the cytoplasm. The protein resides in the cytosol. It localises to the membrane. The protein localises to the inflammasome. Activated by cleavage by B.anthracis lethal toxin (LT) endopeptidase: cleavage by LT promotes ubiquitination and degradation of the N-terminal part, releasing the cleaved C-terminal part of the protein (NACHT, LRR and PYD domains-containing protein 1b, C-terminus), which polymerizes and forms the Nlrp1b inflammasome. Activated by S.flexneri IpaH7.8, an E3 ubiquitin ligase that mediates ubiquitination and degradation of the N-terminal part, releasing the cleaved C-terminal part of the protein, which polymerizes and forms the Nlrp1b inflammasome. Nlrp1b inflammasome is inhibited by DPP8 and DPP9, which sequester the C-terminal fragment of Nlrp1b (NACHT, LRR and PYD domains-containing protein 1b, C-terminus) in a ternary complex, thereby preventing Nlrp1b oligomerization and activation. Nlrp1b inflammasome is activated by Val-boroPro (Talabostat, PT-100), an inhibitor of dipeptidyl peptidases DPP8 and DPP9. Val-boroPro relieves inhibition of DPP8 and/or DPP9 by promoting disruption of the ternary complex, releasing its C-terminal part from autoinhibition. Activated by metabolic inhibitors, such as 2-deoxy-D-glucose and sodium azide, by nutrient deprivation and hypoxia, possibly due to a decrease in cytosolic ATP. Also activated by Toxoplasma gondii. Not activated by muramyl dipeptide, nor by full-length bacterial peptidoglycan. Contrary to its human ortholog, not activated by positive-strand RNA virus such as Semliki Forrest virus or long dsRNA. In terms of biological role, acts as the sensor component of the Nlrp1b inflammasome, which mediates inflammasome activation in response to various pathogen-associated signals, leading to subsequent pyroptosis. Inflammasomes are supramolecular complexes that assemble in the cytosol in response to pathogens and other damage-associated signals and play critical roles in innate immunity and inflammation. Acts as a recognition receptor (PRR): recognizes specific pathogens and other damage-associated signals, such as B.anthracis lethal toxin (LT) or Val-boroPro inhibitor, and mediates the formation of the inflammasome polymeric complex. In response to pathogen-associated signals, the N-terminal part of Nlrp1b is degraded by the proteasome, releasing the cleaved C-terminal part of the protein (NACHT, LRR and PYD domains-containing protein 1b, C-terminus), which polymerizes to initiate the formation of the inflammasome complex: the inflammasome directly recruits pro-caspase-1 (proCASP1) independently of PYCARD/ASC and promotes caspase-1 (CASP1) activation, which subsequently cleaves and activates inflammatory cytokines IL1B and IL18 and gasdermin-D (GSDMD), leading to pyroptosis. In the absence of GSDMD expression, the Nlrp1b inflammasome is able to recruit and activate CASP8, leading to activation of gasdermin-E (GSDME). Activation of Nlrp1b inflammasome is also required for HMGB1 secretion; the active cytokines and HMGB1 stimulate inflammatory responses. Primary mediator of macrophage susceptibility to B.anthracis LT: in response to B.anthracis infection, macrophages and dendritic cells release IL1B and undergo pyroptosis. This early inflammatory response to the toxin increases resistance to infection by B.anthracis spores. Functionally, constitutes the precursor of the Nlrp1b inflammasome, which mediates autoproteolytic processing within the FIIND domain to generate the N-terminal and C-terminal parts, which are associated non-covalently in absence of pathogens and other damage-associated signals. Its function is as follows. Regulatory part that prevents formation of the Nlrp1b inflammasome: in absence of pathogens and other damage-associated signals, interacts with the C-terminal part of Nlrp1b (NACHT, LRR and PYD domains-containing protein 1b, C-terminus), preventing activation of the Nlrp1b inflammasome. In response to pathogen-associated signals, this part is ubiquitinated by the N-end rule pathway and degraded by the proteasome, releasing the cleaved C-terminal part of the protein, which polymerizes and forms the Nlrp1b inflammasome. Constitutes the active part of the Nlrp1b inflammasome. In absence of pathogens and other damage-associated signals, interacts with the N-terminal part of Nlrp1b (NACHT, LRR and PYD domains-containing protein 1b, N-terminus), preventing activation of the Nlrp1b inflammasome. In response to pathogen-associated signals, the N-terminal part of Nlrp1b is degraded by the proteasome, releasing this form, which polymerizes to form the Nlrp1b inflammasome complex: the Nlrp1b inflammasome complex then directly recruits pro-caspase-1 (proCASP1) and promotes caspase-1 (CASP1) activation, leading to gasdermin-D (GSDMD) cleavage and subsequent pyroptosis. The sequence is that of NACHT, LRR and PYD domains-containing protein 1b allele 1 from Mus musculus (Mouse).